We begin with the raw amino-acid sequence, 89 residues long: Large ribosomal subunit protein uL23c (89 aa).

Belongs to the universal ribosomal protein uL23 family. In terms of assembly, part of the 50S ribosomal subunit.

The protein resides in the plastid. Its subcellular location is the chloroplast. In terms of biological role, binds to 23S rRNA. In Staurastrum punctulatum (Green alga), this protein is Large ribosomal subunit protein uL23c (rpl23).